A 730-amino-acid polypeptide reads, in one-letter code: Elongation factor 2 (730 aa).

The 242-residue stretch at 19 to 260 (EKIRNIGIVA…MVIRFLPNPL (242 aa)) folds into the tr-type G domain. GTP-binding positions include 28 to 35 (AHIDHGKT), 94 to 98 (DTPGH), and 148 to 151 (NKVD). H596 is subject to Diphthamide.

The protein belongs to the TRAFAC class translation factor GTPase superfamily. Classic translation factor GTPase family. EF-G/EF-2 subfamily.

It localises to the cytoplasm. Functionally, catalyzes the GTP-dependent ribosomal translocation step during translation elongation. During this step, the ribosome changes from the pre-translocational (PRE) to the post-translocational (POST) state as the newly formed A-site-bound peptidyl-tRNA and P-site-bound deacylated tRNA move to the P and E sites, respectively. Catalyzes the coordinated movement of the two tRNA molecules, the mRNA and conformational changes in the ribosome. The polypeptide is Elongation factor 2 (fusA) (Methanosarcina thermophila).